Reading from the N-terminus, the 188-residue chain is GTPase KRas (188 aa).

Residues 10-18 (GAGGVGKSA), 29-35 (VDEYDPT), 59-60 (AG), and 116-119 (NKCD) contribute to the GTP site. Residues 32–40 (YDPTIEDSY) carry the Effector region motif. The tract at residues 168 to 188 (EKMSKDGKKKKKKTKTKCIIM) is disordered. At Cys-185 the chain carries Cysteine methyl ester. Residue Cys-185 is the site of S-farnesyl cysteine attachment. The propeptide at 186-188 (IIM) is removed in mature form.

The protein belongs to the small GTPase superfamily. Ras family.

Its subcellular location is the cell membrane. It localises to the cytoplasm. It carries out the reaction GTP + H2O = GDP + phosphate + H(+). Alternates between an inactive form bound to GDP and an active form bound to GTP. Activated by a guanine nucleotide-exchange factor (GEF) and inactivated by a GTPase-activating protein (GAP). In terms of biological role, ras proteins bind GDP/GTP and possess intrinsic GTPase activity. Plays an important role in the regulation of cell proliferation. May play a role in promoting oncogenic events by inducing transcriptional silencing of tumor suppressor genes (TSGs). This chain is GTPase KRas (KRAS), found in Meleagris gallopavo (Wild turkey).